Consider the following 256-residue polypeptide: 1-(5-phosphoribosyl)-5-[(5-phosphoribosylamino)methylideneamino] imidazole-4-carboxamide isomerase (256 aa).

Residue D8 is the Proton acceptor of the active site. The active-site Proton donor is D129.

Belongs to the HisA/HisF family.

Its subcellular location is the cytoplasm. It carries out the reaction 1-(5-phospho-beta-D-ribosyl)-5-[(5-phospho-beta-D-ribosylamino)methylideneamino]imidazole-4-carboxamide = 5-[(5-phospho-1-deoxy-D-ribulos-1-ylimino)methylamino]-1-(5-phospho-beta-D-ribosyl)imidazole-4-carboxamide. It functions in the pathway amino-acid biosynthesis; L-histidine biosynthesis; L-histidine from 5-phospho-alpha-D-ribose 1-diphosphate: step 4/9. This is 1-(5-phosphoribosyl)-5-[(5-phosphoribosylamino)methylideneamino] imidazole-4-carboxamide isomerase from Synechococcus sp. (strain CC9311).